A 602-amino-acid polypeptide reads, in one-letter code: Isocitrate dehydrogenase kinase/phosphatase (602 aa).

Residues 325–331 and Lys-346 each bind ATP; that span reads APGIKGM. The active site involves Asp-381.

The protein belongs to the AceK family.

It localises to the cytoplasm. The catalysed reaction is L-seryl-[isocitrate dehydrogenase] + ATP = O-phospho-L-seryl-[isocitrate dehydrogenase] + ADP + H(+). Functionally, bifunctional enzyme which can phosphorylate or dephosphorylate isocitrate dehydrogenase (IDH) on a specific serine residue. This is a regulatory mechanism which enables bacteria to bypass the Krebs cycle via the glyoxylate shunt in response to the source of carbon. When bacteria are grown on glucose, IDH is fully active and unphosphorylated, but when grown on acetate or ethanol, the activity of IDH declines drastically concomitant with its phosphorylation. The polypeptide is Isocitrate dehydrogenase kinase/phosphatase (Paracidovorax citrulli (strain AAC00-1) (Acidovorax citrulli)).